Here is a 250-residue protein sequence, read N- to C-terminus: ATP synthase subunit a (250 aa).

5 helical membrane passes run 27–47 (TDTV…AFYL), 83–103 (IAPF…ISNW), 129–149 (INYV…AGIW), 191–211 (IFAG…IMWA), and 219–239 (FDLF…ILYF).

This sequence belongs to the ATPase A chain family. F-type ATPases have 2 components, CF(1) - the catalytic core - and CF(0) - the membrane proton channel. CF(1) has five subunits: alpha(3), beta(3), gamma(1), delta(1), epsilon(1). CF(0) has three main subunits: a(1), b(2) and c(9-12). The alpha and beta chains form an alternating ring which encloses part of the gamma chain. CF(1) is attached to CF(0) by a central stalk formed by the gamma and epsilon chains, while a peripheral stalk is formed by the delta and b chains.

It is found in the cell membrane. Its function is as follows. Key component of the proton channel; it plays a direct role in the translocation of protons across the membrane. In Mycobacterium ulcerans (strain Agy99), this protein is ATP synthase subunit a.